Here is a 243-residue protein sequence, read N- to C-terminus: UPF0246 protein gbs2036 (243 aa).

The protein belongs to the UPF0246 family.

In Streptococcus agalactiae serotype III (strain NEM316), this protein is UPF0246 protein gbs2036.